Here is a 530-residue protein sequence, read N- to C-terminus: Autoinducer-2 kinase (530 aa).

The protein belongs to the FGGY kinase family.

The protein localises to the cytoplasm. The enzyme catalyses (S)-4,5-dihydroxypentane-2,3-dione + ATP = (2S)-2-hydroxy-3,4-dioxopentyl phosphate + ADP + H(+). Its function is as follows. Catalyzes the phosphorylation of autoinducer-2 (AI-2) to phospho-AI-2, which subsequently inactivates the transcriptional regulator LsrR and leads to the transcription of the lsr operon. Phosphorylates the ring-open form of (S)-4,5-dihydroxypentane-2,3-dione (DPD), which is the precursor to all AI-2 signaling molecules, at the C5 position. In Enterobacter sp. (strain 638), this protein is Autoinducer-2 kinase.